We begin with the raw amino-acid sequence, 94 residues long: NADH dehydrogenase [ubiquinone] iron-sulfur protein 3, mitochondrial (94 aa).

The protein belongs to the complex I 30 kDa subunit family. In terms of assembly, core subunit of respiratory chain NADH dehydrogenase (Complex I) which is composed of 45 different subunits. Interacts with NDUFAF3. Interacts with RAB5IF. Found in subcomplexes containing subunits NDUFS2, MT-ND1 and NDUFA13.

Its subcellular location is the mitochondrion inner membrane. It catalyses the reaction a ubiquinone + NADH + 5 H(+)(in) = a ubiquinol + NAD(+) + 4 H(+)(out). Functionally, core subunit of the mitochondrial membrane respiratory chain NADH dehydrogenase (Complex I) which catalyzes electron transfer from NADH through the respiratory chain, using ubiquinone as an electron acceptor. Essential for the catalytic activity and assembly of complex I. The polypeptide is NADH dehydrogenase [ubiquinone] iron-sulfur protein 3, mitochondrial (Mesocricetus auratus (Golden hamster)).